A 192-amino-acid polypeptide reads, in one-letter code: Xanthine phosphoribosyltransferase (192 aa).

Residues Leu-20 and Asn-27 each contribute to the xanthine site. 128–132 (ANGQA) is a binding site for 5-phospho-alpha-D-ribose 1-diphosphate. Lys-156 contacts xanthine.

Belongs to the purine/pyrimidine phosphoribosyltransferase family. Xpt subfamily. Homodimer.

Its subcellular location is the cytoplasm. The enzyme catalyses XMP + diphosphate = xanthine + 5-phospho-alpha-D-ribose 1-diphosphate. It participates in purine metabolism; XMP biosynthesis via salvage pathway; XMP from xanthine: step 1/1. In terms of biological role, converts the preformed base xanthine, a product of nucleic acid breakdown, to xanthosine 5'-monophosphate (XMP), so it can be reused for RNA or DNA synthesis. The chain is Xanthine phosphoribosyltransferase from Lacticaseibacillus casei (strain BL23) (Lactobacillus casei).